The sequence spans 458 residues: uncharacterized protein (458 aa).

One can recognise a TRAM domain in the interval 5 to 65; sequence QAPVNKNDVV…KGYGFGRVLN (61 aa). Positions 78, 84, 87, and 165 each coordinate [4Fe-4S] cluster. S-adenosyl-L-methionine contacts are provided by Gln289, Tyr318, Glu339, and Asp387. Catalysis depends on Cys414, which acts as the Nucleophile.

This sequence belongs to the class I-like SAM-binding methyltransferase superfamily. RNA M5U methyltransferase family.

This is an uncharacterized protein from Halalkalibacterium halodurans (strain ATCC BAA-125 / DSM 18197 / FERM 7344 / JCM 9153 / C-125) (Bacillus halodurans).